Consider the following 86-residue polypeptide: Mu-theraphotoxin-Hhn1b 1 (86 aa).

The N-terminal stretch at 1-21 is a signal peptide; that stretch reads MKASMFLALAGLALLFVVCYA. Positions 22 to 49 are excised as a propeptide; that stretch reads SESEEKEFSNELLSSVLAVDDNSKGEER. 3 disulfides stabilise this stretch: Cys51/Cys66, Cys58/Cys73, and Cys65/Cys80. Ile84 carries the post-translational modification Isoleucine amide.

This sequence belongs to the neurotoxin 10 (Hwtx-1) family. 22 (Htx-4) subfamily. In terms of assembly, monomer. Expressed by the venom gland.

Its subcellular location is the secreted. Neurotoxin that selectively inhibits neuronal tetrodotoxin-sensitive voltage-gated sodium channels (Nav) (IC(50)=44.6 nM). It is active on Nav1.2/SCN2A (IC(50)=22.4 nM), Nav1.6/SCN8A (IC(50)=50.1 nM) and Nav1.7/SCN9A (IC(50)=48.9 nM). It shows low affinity for lipid bilayers. This Cyriopagopus hainanus (Chinese bird spider) protein is Mu-theraphotoxin-Hhn1b 1.